We begin with the raw amino-acid sequence, 360 residues long: G-protein coupled receptor 15 (360 aa).

Residues 1-33 (MDPEETSVYLDYYYATSPNPDIRETHSHVPYTS) lie on the Extracellular side of the membrane. The helical transmembrane segment at 34 to 54 (VFLPVFYTAVFLTGVLGNLVL) threads the bilayer. At 55–69 (MGALHFKPGSRRLID) the chain is on the cytoplasmic side. The chain crosses the membrane as a helical span at residues 70–90 (IFIINLAASDFIFLVTLPLWV). Topologically, residues 91–120 (DKEASLGLWRTGSFLCKGSSYMISVNMHCS) are extracellular. The helical transmembrane segment at 121–141 (VFLLTCMSVDRYLAIVCPVVS) threads the bilayer. Residues 142-149 (RKFRRTDC) are Cytoplasmic-facing. Residues 150–170 (AYVVCASIWFISCLLGLPTLL) form a helical membrane-spanning segment. The Extracellular segment spans residues 171–192 (SRELTLIDDKPYCAEKKATPLK). Residues 193-213 (LIWSLVALIFTFFVPLLSIVT) form a helical membrane-spanning segment. Over 214–239 (CYCCIARKLCAHYQQSGKHNKKLKKS) the chain is Cytoplasmic. The helical transmembrane segment at 240-260 (IKIIFIVVAAFLVSWLPFNTF) threads the bilayer. At 261-284 (KLLAIVSGLQQERYFPSAMLQLGM) the chain is on the extracellular side. Residues 285 to 305 (EVSGPLAFANSCVNPFIYYIF) form a helical membrane-spanning segment. At 306-360 (DSYIRRAIVHCLCPCLKNYDFGSSTETSDSHLTKALSTFIHAEDFTRRRKRSVSL) the chain is on the cytoplasmic side. Phosphoserine is present on Ser359.

The protein belongs to the G-protein coupled receptor 1 family. As to quaternary structure, interacts with adapter YWHAE; this interaction promotes ER-to-Golgi transport of GPR15. Phosphorylation is necessary for YWHAE binding and efficient surface expression. Post-translationally, O-glycosylated. Sialylated O-glycans in the N-terminal tail inhibits binding of GPR15LG. In terms of processing, sulfation is required for efficient binding of GPR15LG.

It is found in the cell membrane. In terms of biological role, g protein-coupled receptor that plays an important role in immune homeostasis. Acts via its natural ligand GPR15LG, a chemokine-like polypeptide strongly expressed in gastrointestinal tissues. GPR15-GPR15LG signaling axis regulates intestinal homeostasis and inflammation through the migration of immune cells. Controls thereby the specific homing of T-cells, particularly FOXP3+ regulatory T-cells (Tregs), to the large intestine lamina propria. Also required for skin localization of thymus-derived dendritic epidermal T-cells. Plays an important role in mediating cytoprotective function as well as angiogenesis of thrombomodulin. Mechanistically, preferentially signals through the Gi/o pathway to inhibit adenylate cyclase activity and activate a phosphatidylinositol-calcium second messenger system that regulates the release of Ca(2+) ions from intracellular stores. This Macaca mulatta (Rhesus macaque) protein is G-protein coupled receptor 15 (GPR15).